The following is a 313-amino-acid chain: uncharacterized protein (313 aa).

A run of 2 helical transmembrane segments spans residues Leu42–Thr64 and Val74–Val96.

It is found in the cell membrane. This is an uncharacterized protein from Treponema pallidum (strain Nichols).